The primary structure comprises 473 residues: YFFPLFLVTIFLYKWLVKKTPSKNLPPSPPRLPIIGNLHQIGPDPQISLRDLAREYGPVMHLKFGSVPVLVVSSADGAREIFKTHDLVFADRPYSSVANRIFYNGRDMVFARYTEYWRQVKSTCVTQLLSVKRVQSFHNVREEEVALLLDNIENSKSKVINLSEMLIELTGNVVCRAALGSGYNVDSYKSLLLQIMDMLGYSRSIEDFFPSLGWVDWITGLKGKVEKAANGVDAFLEGVLKNHTNPSTSSANKDFVSILLEIQEADAGSSMDKECIKSLIWDMLGAGTETIATALEWTIGALIKSPDAMSKLQKEVREIGKGKSRIEEGDLVKMDYLKAVMKESMRLYFTAPLLVPREARQDVKFMGYDIKSGTQVLINAWAIARDPSSWDNPEEFRPERFLNSPIDYKGFNYEYIPFGAGRRGCPGIQFAISVNELVVANVVNKFNFELPDGKRLEEMDMTASTGITFHKKS.

The chain crosses the membrane as a helical span at residues 1 to 17 (YFFPLFLVTIFLYKWLV). Residues 350-355 (TAPLLV) form a substrate specificity region. A heme-binding site is contributed by C425.

This sequence belongs to the cytochrome P450 family. The cofactor is heme.

It localises to the microsome membrane. The catalysed reaction is (7S)-marmesin + reduced [NADPH--hemoprotein reductase] + O2 = psoralen + acetone + oxidized [NADPH--hemoprotein reductase] + 2 H2O + H(+). The protein operates within secondary metabolite biosynthesis. In terms of biological role, involved in the biosynthesis of coumarins and furanocoumarins (FCs), natural products required for defense responses against attacks by predators with potential medical and agroindustrial usages such as anticoagulant, rodenticide and artificial vanilla substitutes. Involved in linear furanocumarin (psoralen) biosynthesis. Converts marmesin to psoralen and, with much lower affinity, 5-hydroxymarmesin to bergaptol. The chain is Psoralen synthase from Pastinaca sativa (Wild parsnip).